The sequence spans 165 residues: V-type proton ATPase 16 kDa proteolipid subunit (165 aa).

Over 1-10 (MSSTFSGDET) the chain is Lumenal. A helical transmembrane segment spans residues 11–33 (APFFGFLGAAAALVFSCMGAAYG). Residues 34-55 (TAKSGVGVASMGVMRPELVMKS) lie on the Cytoplasmic side of the membrane. Residues 56-76 (IVPVVMAGVLGIYGLIIAVII) form a helical membrane-spanning segment. Residues 77 to 95 (STGINPKAKSYYLFDGYAH) lie on the Lumenal side of the membrane. Residues 96 to 117 (LSSGLACGLAGLSAGMAIGIVG) form a helical membrane-spanning segment. At 118–129 (DAGVRANAQQPK) the chain is on the cytoplasmic side. A helical membrane pass occupies residues 130–155 (LFVGMILILIFAEALALYGLIVGIIL). The Lumenal segment spans residues 156–165 (SSRAGQSRAD).

Belongs to the V-ATPase proteolipid subunit family. V-ATPase is a heteromultimeric enzyme composed of a peripheral catalytic V1 complex (main components: subunits A, B, C, D, E, and F) attached to an integral membrane V0 proton pore complex (main component: the proteolipid protein; which is present as a hexamer that forms the proton-conducting pore). Higher expression in leaves, followed by roots and weakly in flowers. Expression in leaves is light-dependent.

It is found in the vacuole membrane. In terms of biological role, proton-conducting pore forming subunit of the membrane integral V0 complex of vacuolar ATPase. V-ATPase is responsible for acidifying a variety of intracellular compartments in eukaryotic cells. Necessary for the crassulacean acid metabolism. This is V-type proton ATPase 16 kDa proteolipid subunit from Kalanchoe daigremontiana (Devil's backbone).